The following is a 137-amino-acid chain: Large ribosomal subunit protein uL16 (137 aa).

It belongs to the universal ribosomal protein uL16 family. In terms of assembly, part of the 50S ribosomal subunit.

Functionally, binds 23S rRNA and is also seen to make contacts with the A and possibly P site tRNAs. The polypeptide is Large ribosomal subunit protein uL16 (Wolbachia sp. subsp. Brugia malayi (strain TRS)).